Here is a 199-residue protein sequence, read N- to C-terminus: MSGFTRPLARLIDQFERLPGIGPRTAQRLALHLLRQPEEQIRSFADALLAARTEVGHCQTCHHLSAEPTCEICRNPERANGQICVVADSRDLLALERTREFSGHYHVLGGLISPMDGIGPDLLQISSLVKRVAANNTEEVILALTPSVEGDTTSLYVARLLKPFTRVSRIAYGLPVGSELEYADDVTLSRALEGRRAVE.

The C4-type zinc finger occupies cysteine 58 to cysteine 73. The region spanning glycine 81 to proline 175 is the Toprim domain.

Belongs to the RecR family.

Its function is as follows. May play a role in DNA repair. It seems to be involved in an RecBC-independent recombinational process of DNA repair. It may act with RecF and RecO. The polypeptide is Recombination protein RecR (Synechococcus sp. (strain WH7803)).